We begin with the raw amino-acid sequence, 713 residues long: Subtilisin-like protease SBT4.9 (713 aa).

The N-terminal stretch at 1–24 (MARRADSFCLISCVLVSFVISVSA) is a signal peptide. Positions 25 to 113 (VTDDSQDKQV…VFPDINYKLQ (89 aa)) are cleaved as a propeptide — activation peptide. Residues 34-112 (VYVVYMGSLP…SVFPDINYKL (79 aa)) enclose the Inhibitor I9 domain. The 444-residue stretch at 117-560 (SWDFLGLKEG…AGHVDPIAAI (444 aa)) folds into the Peptidase S8 domain. D145 (charge relay system) is an active-site residue. The N-linked (GlcNAc...) asparagine glycan is linked to N176. Residue H200 is the Charge relay system of the active site. Residues N215 and N223 are each glycosylated (N-linked (GlcNAc...) asparagine). A PA domain is found at 356-415 (NYPLYGGSTDGPLLRGKILVSEDKVSSEIVVANINENYHDYAYVSILPSSALSKDDFDSV). N420 is a glycosylation site (N-linked (GlcNAc...) asparagine). S499 acts as the Charge relay system in catalysis. Residues N536, N583, N627, and N637 are each glycosylated (N-linked (GlcNAc...) asparagine).

It belongs to the peptidase S8 family. In terms of processing, the C-terminal propeptide is autocleaved.

Its subcellular location is the secreted. In Arabidopsis thaliana (Mouse-ear cress), this protein is Subtilisin-like protease SBT4.9.